Here is a 463-residue protein sequence, read N- to C-terminus: L-seryl-tRNA(Sec) selenium transferase (463 aa).

Lys-295 is subject to N6-(pyridoxal phosphate)lysine.

It belongs to the SelA family. Homodecamer; pentamer of dimers. Binds only one seryl-tRNA(Sec) per dimer. Pyridoxal 5'-phosphate serves as cofactor.

It is found in the cytoplasm. It catalyses the reaction L-seryl-tRNA(Sec) + selenophosphate + H(+) = L-selenocysteinyl-tRNA(Sec) + phosphate. Its pathway is aminoacyl-tRNA biosynthesis; selenocysteinyl-tRNA(Sec) biosynthesis; selenocysteinyl-tRNA(Sec) from L-seryl-tRNA(Sec) (bacterial route): step 1/1. Converts seryl-tRNA(Sec) to selenocysteinyl-tRNA(Sec) required for selenoprotein biosynthesis. This is L-seryl-tRNA(Sec) selenium transferase from Salmonella paratyphi B (strain ATCC BAA-1250 / SPB7).